We begin with the raw amino-acid sequence, 95 residues long: Small ribosomal subunit protein bS18 (95 aa).

It belongs to the bacterial ribosomal protein bS18 family. Part of the 30S ribosomal subunit. Forms a tight heterodimer with protein bS6.

Its function is as follows. Binds as a heterodimer with protein bS6 to the central domain of the 16S rRNA, where it helps stabilize the platform of the 30S subunit. This is Small ribosomal subunit protein bS18 from Rickettsia massiliae (strain Mtu5).